A 270-amino-acid chain; its full sequence is Diaminopimelate epimerase (270 aa).

The substrate site is built by N15, Q49, and N66. The active-site Proton donor is the C75. Substrate is bound by residues 76-77 (GN), N155, N187, and 204-205 (ER). The Proton acceptor role is filled by C213. Residue 214-215 (GS) participates in substrate binding.

This sequence belongs to the diaminopimelate epimerase family. Homodimer.

The protein resides in the cytoplasm. It carries out the reaction (2S,6S)-2,6-diaminopimelate = meso-2,6-diaminopimelate. Its pathway is amino-acid biosynthesis; L-lysine biosynthesis via DAP pathway; DL-2,6-diaminopimelate from LL-2,6-diaminopimelate: step 1/1. In terms of biological role, catalyzes the stereoinversion of LL-2,6-diaminopimelate (L,L-DAP) to meso-diaminopimelate (meso-DAP), a precursor of L-lysine and an essential component of the bacterial peptidoglycan. The polypeptide is Diaminopimelate epimerase (Rickettsia felis (strain ATCC VR-1525 / URRWXCal2) (Rickettsia azadi)).